The primary structure comprises 368 residues: Agmatine deiminase (368 aa).

Catalysis depends on Cys357, which acts as the Amidino-cysteine intermediate.

Belongs to the agmatine deiminase family. As to quaternary structure, homodimer.

The enzyme catalyses agmatine + H2O = N-carbamoylputrescine + NH4(+). Its pathway is amine and polyamine biosynthesis; putrescine biosynthesis via agmatine pathway; N-carbamoylputrescine from agmatine: step 1/1. Functionally, mediates the hydrolysis of agmatine into N-carbamoylputrescine in the arginine decarboxylase (ADC) pathway of putrescine biosynthesis, a basic polyamine. This Ectopseudomonas mendocina (strain ymp) (Pseudomonas mendocina) protein is Agmatine deiminase.